The following is a 734-amino-acid chain: Amino-acid acetyltransferase, mitochondrial (734 aa).

A disordered region spans residues 384–433 (YSETSSRSTRAEADSNFNLRDDIPLSSFTEQKSGELEYSPRHQNDSPTQQ). Composition is skewed to basic and acidic residues over residues 392-406 (TRAE…RDDI) and 415-427 (KSGE…RHQN). In terms of domain architecture, N-acetyltransferase spans 555–724 (GVPQISLTDP…YEAVCKTIEP (170 aa)).

The protein belongs to the acetyltransferase family.

It is found in the mitochondrion. It carries out the reaction L-glutamate + acetyl-CoA = N-acetyl-L-glutamate + CoA + H(+). The protein operates within amino-acid biosynthesis; L-arginine biosynthesis; N(2)-acetyl-L-ornithine from L-glutamate: step 1/4. In terms of biological role, N-acetylglutamate synthase involved in arginine biosynthesis. The chain is Amino-acid acetyltransferase, mitochondrial (arg2) from Botryotinia fuckeliana (strain B05.10) (Noble rot fungus).